We begin with the raw amino-acid sequence, 860 residues long: Protein argonaute-2 (860 aa).

Residue tyrosine 2 is modified to 3'-nitrotyrosine. Positions 230–349 constitute a PAZ domain; sequence PVIEFVCEVL…LPLEVCNIVA (120 aa). The segment at 312-317 is interaction with guide RNA; that stretch reads YFKDRH. Phosphoserine is present on serine 388. The 302-residue stretch at 518–819 folds into the Piwi domain; sequence LVVVILPGKT…VAFRARYHLV (302 aa). Residues 525-567 form an interaction with guide RNA region; that stretch reads GKTPVYAEVKRVGDTVLGMATQCVQMKNVQRTTPQTLSNLCLK. The interval 588–591 is interaction with GW182 family members; that stretch reads FQQP. Aspartate 598 provides a ligand contact to a divalent metal cation. Residues 651–661 are interaction with GW182 family members; it reads LIQFYKSTRFK. Aspartate 670 contributes to the a divalent metal cation binding site. Position 701 is a 4-hydroxyproline (proline 701). Interaction with guide RNA regions lie at residues 710–711, 754–762, and 791–813; these read KR, HAGIQGTSR, and YVRC…VAFR. Histidine 808 contributes to the a divalent metal cation binding site. A phosphoserine mark is found at serine 825, serine 829, serine 832, and serine 835.

The protein belongs to the argonaute family. Ago subfamily. As to quaternary structure, interacts with DICER1 through its Piwi domain and with TARBP2 during assembly of the RNA-induced silencing complex (RISC). Together, DICER1, AGO2 and TARBP2 constitute the trimeric RISC loading complex (RLC), or micro-RNA (miRNA) loading complex (miRLC). Within the RLC/miRLC, DICER1 and TARBP2 are required to process precursor miRNAs (pre-miRNAs) to mature miRNAs and then load them onto AGO2. AGO2 bound to the mature miRNA constitutes the minimal RISC and may subsequently dissociate from DICER1 and TARBP2. Note however that the term RISC has also been used to describe the trimeric RLC/miRLC. The formation of RISC complexes containing siRNAs rather than miRNAs appears to occur independently of DICER1. Interacts with AGO1. Also interacts with DDB1, DDX5, DDX6, DDX20, DHX30, DHX36, DDX47, DHX9, ELAVL, FXR1, GEMIN4, HNRNPF, IGF2BP1, ILF3, IMP8, MATR3, PABPC1, PRMT5, P4HA1, P4HB, RBM4, SART3, TNRC6A, TNRC6B, UPF1 and YBX1. Interacts with the P-body components DCP1A and XRN1. Associates with polysomes and messenger ribonucleoproteins (mNRPs). Interacts with RBM4; the interaction is modulated under stress-induced conditions, occurs under both cell proliferation and differentiation conditions and in an RNA- and phosphorylation-independent manner. Interacts with LIMD1, WTIP and AJUBA. Interacts with TRIM71; the interaction increases in presence of RNA. Interacts with APOBEC3G in an RNA-dependent manner. Interacts with APOBEC3A, APOBEC3C, APOBEC3F and APOBEC3H. Interacts with DICER1, TARBP2, EIF6, MOV10 and RPL7A (60S ribosome subunit); they form a large RNA-induced silencing complex (RISC). Interacts with FMR1. Interacts with ZFP36. Interacts with RC3H1; the interaction is RNA independent. Found in a complex, composed of AGO2, CHD7 and ARB2A. Interacts with SND1 and SYT11. Interacts with CLNK. Interacts with GARRE1. Interacts with GRB2; this interaction is important for the formation of a ternary complex containing GRB2, AGO2 and DICER1. The cofactor is Mg(2+). Mn(2+) serves as cofactor. In terms of processing, hydroxylated. 4-hydroxylation appears to enhance protein stability but is not required for miRNA-binding or endonuclease activity. Ubiquitinated on surface-exposed lysines by a SCF-like E3 ubiquitin-protein ligase complex containing ZSWIM8 during target-directed microRNA degradation (TDMD), a process that mediates degradation of microRNAs (miRNAs). Ubiquitination by the SCF-like E3 ubiquitin-protein ligase complex containing ZSWIM8 leads to its subsequent degradation, thereby exposing miRNAs for degradation. ZSWIM8 recognizes and binds AGO2 when it is engaged with a TDMD target. Post-translationally, phosphorylation at Ser-388 by AKT3; leads to up-regulate translational repression of microRNA target and down-regulate endonucleolytic cleavage. In terms of processing, a phosphorylation cycle of C-terminal serine cluster (Ser-825-Ser-835) regulates the release of target mRNAs. Target-binding leads to phosphorylation of these residues by CSNK1A1, which reduces the affinity of AGO2 for mRNA and enables target release. The ANKRD52-PPP6C phosphatase complex dephosphorylates the residues, which primes AGO2 for binding a new target.

The protein resides in the cytoplasm. It localises to the P-body. The protein localises to the nucleus. It carries out the reaction Endonucleolytic cleavage to 5'-phosphomonoester.. Functionally, required for RNA-mediated gene silencing (RNAi) by the RNA-induced silencing complex (RISC). The 'minimal RISC' appears to include AGO2 bound to a short guide RNA such as a microRNA (miRNA) or short interfering RNA (siRNA). These guide RNAs direct RISC to complementary mRNAs that are targets for RISC-mediated gene silencing. The precise mechanism of gene silencing depends on the degree of complementarity between the miRNA or siRNA and its target. Binding of RISC to a perfectly complementary mRNA generally results in silencing due to endonucleolytic cleavage of the mRNA specifically by AGO2. Binding of RISC to a partially complementary mRNA results in silencing through inhibition of translation, and this is independent of endonuclease activity. May inhibit translation initiation by binding to the 7-methylguanosine cap, thereby preventing the recruitment of the translation initiation factor eIF4-E. May also inhibit translation initiation via interaction with EIF6, which itself binds to the 60S ribosomal subunit and prevents its association with the 40S ribosomal subunit. The inhibition of translational initiation leads to the accumulation of the affected mRNA in cytoplasmic processing bodies (P-bodies), where mRNA degradation may subsequently occur. In some cases RISC-mediated translational repression is also observed for miRNAs that perfectly match the 3' untranslated region (3'-UTR). Can also up-regulate the translation of specific mRNAs under certain growth conditions. Binds to the AU element of the 3'-UTR of the TNF (TNF-alpha) mRNA and up-regulates translation under conditions of serum starvation. Also required for transcriptional gene silencing (TGS), in which short RNAs known as antigene RNAs or agRNAs direct the transcriptional repression of complementary promoter regions. The sequence is that of Protein argonaute-2 (Ago2) from Rattus norvegicus (Rat).